The sequence spans 282 residues: Follicle cell protein 3C-1 (282 aa).

The tract at residues 103–156 (EASTETIGNNGTTETTVGEAPIIGSSEGSTRSMEPTTASPLMSTNPSSSSSLVS) is disordered. The segment covering 106–118 (TETIGNNGTTETT) has biased composition (low complexity). Polar residues predominate over residues 128–140 (SEGSTRSMEPTTA). Over residues 141 to 156 (SPLMSTNPSSSSSLVS) the composition is skewed to low complexity.

As to expression, expressed in follicle cells during vitelline membrane formation.

This chain is Follicle cell protein 3C-1 (Fcp3C), found in Drosophila melanogaster (Fruit fly).